The sequence spans 582 residues: Spermatogenesis-associated protein 7 homolog (582 aa).

2 disordered regions span residues 167–192 and 251–289; these read LMSG…CDRR and RKDF…EVNI. 2 stretches are compositionally biased toward polar residues: residues 169–181 and 262–274; these read SGTQ…SPSR and ETQT…NSEL.

In terms of assembly, found in a complex with CFAP410, NEK1 and SPATA7. Interacts with NEK1. Interacts with RPGRIP1. Interacts with RPGR. Interacts with NPHP4. Interacts with NPHP1. Interacts with AHI1. In terms of tissue distribution, expressed in the retina (at protein level). Expressed in the choroid region and retinal pigment endothelium, within the photoreceptor layer (at protein level).

The protein resides in the cytoplasm. It is found in the cytoskeleton. It localises to the cilium axoneme. The protein localises to the cilium basal body. Its subcellular location is the cell projection. The protein resides in the cilium. It is found in the photoreceptor outer segment. Its function is as follows. Involved in the maintenance of both rod and cone photoreceptor cells. Required for photoreceptor-specific localization of proximal connecting cilium (CC) proteins RPGR, AHI1, NPHP1, NPHP4, and RPGRIP1 at the distal CC, a photoreceptor-specific extension of the primary cilium transition zone. Maintenance of protein localization at the photoreceptor-specific distal CC is essential for normal microtubule stability and to prevent photoreceptor degeneration. The sequence is that of Spermatogenesis-associated protein 7 homolog (Spata7) from Mus musculus (Mouse).